We begin with the raw amino-acid sequence, 108 residues long: ER membrane protein complex subunit 6 (108 aa).

3 helical membrane passes run 21–41 (VVSF…GILG), 45–65 (YEGL…LFAL), and 86–106 (ILDG…LVYV).

The protein belongs to the EMC6 family.

The protein localises to the endoplasmic reticulum membrane. The chain is ER membrane protein complex subunit 6 from Schizosaccharomyces pombe (strain 972 / ATCC 24843) (Fission yeast).